We begin with the raw amino-acid sequence, 311 residues long: Pyrimidine-specific ribonucleoside hydrolase RihA (311 aa).

His240 is a catalytic residue.

The protein belongs to the IUNH family. RihA subfamily.

Its function is as follows. Hydrolyzes with equal efficiency cytidine or uridine to ribose and cytosine or uracil, respectively. The polypeptide is Pyrimidine-specific ribonucleoside hydrolase RihA (Escherichia coli O81 (strain ED1a)).